Here is a 118-residue protein sequence, read N- to C-terminus: Putative pterin-4-alpha-carbinolamine dehydratase (118 aa).

It belongs to the pterin-4-alpha-carbinolamine dehydratase family.

The enzyme catalyses (4aS,6R)-4a-hydroxy-L-erythro-5,6,7,8-tetrahydrobiopterin = (6R)-L-erythro-6,7-dihydrobiopterin + H2O. This Pseudomonas fluorescens (strain SBW25) protein is Putative pterin-4-alpha-carbinolamine dehydratase.